A 137-amino-acid chain; its full sequence is Large-conductance mechanosensitive channel (137 aa).

A run of 2 helical transmembrane segments spans residues 10 to 30 (FAMR…AAFG) and 76 to 96 (GVFI…FMAI).

This sequence belongs to the MscL family. In terms of assembly, homopentamer.

The protein resides in the cell inner membrane. Functionally, channel that opens in response to stretch forces in the membrane lipid bilayer. May participate in the regulation of osmotic pressure changes within the cell. This chain is Large-conductance mechanosensitive channel, found in Klebsiella pneumoniae subsp. pneumoniae (strain ATCC 700721 / MGH 78578).